The primary structure comprises 634 residues: Sodium-dependent neutral amino acid transporter B(0)AT1 (634 aa).

Over 1-41 the chain is Cytoplasmic; it reads MVRLVLPNPGLDTRILSLAELETIEQEEASSRPKWDNKAQY. Ser-17 is subject to Phosphoserine. A helical membrane pass occupies residues 42–62; it reads LLTCVGFCVGLGNVWRFPYLC. Residues 63-65 are Extracellular-facing; the sequence is QSH. Residues 66–86 form a helical membrane-spanning segment; that stretch reads GGGAFMIPFLILLVLEGIPLL. Residues 87–120 lie on the Cytoplasmic side of the membrane; the sequence is HLEFAIGQRLRRGSLGVWSSIHPALKGVGLTSML. Residues 121 to 141 form a helical membrane-spanning segment; the sequence is VSFVVGLYYNTIISWIMWYLF. Residues 142–192 lie on the Extracellular side of the membrane; the sequence is NSFQEPLPWSECPLNENQTGYVDECARSSPVDYFWYRETLNISTSISDSGS. Residues Asn-158 and Asn-182 are each glycosylated (N-linked (GlcNAc...) asparagine). The helical transmembrane segment at 193–213 threads the bilayer; sequence IQWRMLLCLACAWSVLYMCTI. At 214-221 the chain is on the cytoplasmic side; the sequence is RGIETTGK. Residues 222–242 traverse the membrane as a helical segment; the sequence is VVYITSTLPYVVLTIFLIRGL. The Extracellular portion of the chain corresponds to 243 to 268; the sequence is TLKGATKGIIYLFTPNVTELANPVTW. N-linked (GlcNAc...) asparagine glycosylation is present at Asn-258. Residues 269-289 traverse the membrane as a helical segment; the sequence is LDAGAQVFFSFSLAFGGLISF. At 290–304 the chain is on the cytoplasmic side; it reads SSYNSVHNNCERDSV. A helical transmembrane segment spans residues 305 to 325; that stretch reads IVSIINGFTSVYVAIVIYSII. At 326–413 the chain is on the extracellular side; that stretch reads GFRATQRYDD…TEAITKMPVS (88 aa). N-linked (GlcNAc...) asparagine glycosylation is found at Asn-354 and Asn-368. Residues 414-434 traverse the membrane as a helical segment; sequence PLWSVLFFIMLFCLGLSSMFG. Over 435 to 456 the chain is Cytoplasmic; it reads NMEGVVVPLQDLKVIPPKWPKE. A helical membrane pass occupies residues 457–477; that stretch reads LLTGLICLGTFLIGFIFTLNS. Topologically, residues 478–487 are extracellular; that stretch reads GQYWLSLLDS. A helical transmembrane segment spans residues 488 to 508; it reads YAVSIPLLIIAFCEMFSVVYV. The Cytoplasmic segment spans residues 509–531; the sequence is YGVDRFNKDIEFMIGHKPNIFWQ. A helical transmembrane segment spans residues 532–552; sequence VTWRVVSPLLMLIILVFFFVV. Residues 553–581 lie on the Extracellular side of the membrane; it reads QVSQELTYSIWNPGYEEFPKSQKISHPNW. The chain crosses the membrane as a helical span at residues 582 to 602; it reads VYAVVVIVAGVPSLTIPSYAI. Residues 603 to 634 are Cytoplasmic-facing; that stretch reads YKLIRNCCQKPGDRQGLVSTLSTASMNGDLKY. Residue Ser-627 is modified to Phosphoserine.

Belongs to the sodium:neurotransmitter symporter (SNF) (TC 2.A.22) family. SLC6A19 subfamily. In terms of assembly, interacts in a tissue-specific manner with ACE2 in small intestine and with CLTRN in the kidney. Interacts with CLTRN; this interaction is required for trafficking of SLC6A19 to the plasma membrane and for its catalytic activation in kidneys. Interacts with ACE2; this interaction is required for trafficking of SLC6A19 to the plasma membrane and for its catalytic activation in intestine. Interacts with ANPEP; the interaction positively regulates its amino acid transporter activity.

The protein localises to the membrane. It carries out the reaction L-alanine(in) + Na(+)(in) = L-alanine(out) + Na(+)(out). The enzyme catalyses L-cysteine(in) + Na(+)(in) = L-cysteine(out) + Na(+)(out). The catalysed reaction is L-glutamine(in) + Na(+)(in) = L-glutamine(out) + Na(+)(out). It catalyses the reaction glycine(in) + Na(+)(in) = glycine(out) + Na(+)(out). It carries out the reaction L-isoleucine(in) + Na(+)(in) = L-isoleucine(out) + Na(+)(out). The enzyme catalyses L-leucine(in) + Na(+)(in) = L-leucine(out) + Na(+)(out). The catalysed reaction is L-methionine(in) + Na(+)(in) = L-methionine(out) + Na(+)(out). It catalyses the reaction L-phenylalanine(in) + Na(+)(in) = L-phenylalanine(out) + Na(+)(out). It carries out the reaction L-serine(in) + Na(+)(in) = L-serine(out) + Na(+)(out). The enzyme catalyses L-tryptophan(in) + Na(+)(in) = L-tryptophan(out) + Na(+)(out). The catalysed reaction is L-tyrosine(in) + Na(+)(in) = L-tyrosine(out) + Na(+)(out). It catalyses the reaction L-valine(in) + Na(+)(in) = L-valine(out) + Na(+)(out). Transporter that mediates resorption of neutral amino acids across the apical membrane of renal and intestinal epithelial cells. This uptake is sodium-dependent and chloride-independent. Requires CLTRN in kidney or ACE2 in intestine for cell surface expression and amino acid transporter activity. This Pongo abelii (Sumatran orangutan) protein is Sodium-dependent neutral amino acid transporter B(0)AT1 (SLC6A19).